A 517-amino-acid polypeptide reads, in one-letter code: Zinc finger protein AEBP2 (517 aa).

Residues M1 to I229 form a disordered region. At A2 the chain carries N-acetylalanine. 2 positions are modified to phosphoserine: S18 and S24. The span at P36–A51 shows a compositional bias: acidic residues. The segment covering G61–E78 has biased composition (gly residues). Residues G94 to S121 are compositionally biased toward acidic residues. Over residues A122–G150 the composition is skewed to low complexity. A Phosphoserine modification is found at S141. Over residues G152–G163 the composition is skewed to basic and acidic residues. 2 stretches are compositionally biased toward gly residues: residues G166 to S175 and G185 to S196. Phosphoserine is present on residues S206, S210, and S211. Residues M209–V294 form an interaction with RBBP4 region. The segment at Y261–H286 adopts a C2H2-type 1 zinc-finger fold. The C2H2-type 2; degenerate zinc-finger motif lies at K300–H322. The segment at F328–H352 adopts a C2H2-type 3 zinc-finger fold. Residues H352–P365 are compositionally biased toward polar residues. The tract at residues H352 to P394 is disordered. Residues M377–P392 are compositionally biased toward basic residues. Phosphoserine is present on S390. The interaction with SUZ12 stretch occupies residues R407–S478. Positions T495 to Q517 are important for nucleosome binding activity of the PRC2 complex.

Belongs to the AEBP2/jing C2H2-type zinc-finger family. As to quaternary structure, self-associates. Associates with the PRC2 complex, which consists of the core components EED, EZH1 or EZH2, SUZ12, and RBBP4, and various combinations of accessory subunits including AEBP2, JARID2, PHF19, MTF2 and EPOP. Found in a monomeric PRC2.2 (class 2) complex consisting of at least SUZ12, RBBP4, AEBP2 and JARID2. Within the PRC2 complex, interacts directly with SUZ12; competes with PHF19 for SUZ12 binding. Interacts with EED, EZH2, and RBBP4. May also interact with RBBP7.

It localises to the nucleus. Functionally, acts as an accessory subunit for the core Polycomb repressive complex 2 (PRC2), which mediates histone H3K27 (H3K27me3) trimethylation on chromatin leading to transcriptional repression of the affected target gene. Plays a role in nucleosome localization of the PRC2 complex. The protein is Zinc finger protein AEBP2 (AEBP2) of Homo sapiens (Human).